The chain runs to 104 residues: UPF0145 protein NP_2600A (104 aa).

It belongs to the UPF0145 family.

The sequence is that of UPF0145 protein NP_2600A from Natronomonas pharaonis (strain ATCC 35678 / DSM 2160 / CIP 103997 / JCM 8858 / NBRC 14720 / NCIMB 2260 / Gabara) (Halobacterium pharaonis).